Consider the following 397-residue polypeptide: Phosphoglycerate kinase (397 aa).

Substrate is bound by residues 25–27 (DLN), R41, 64–67 (HLGR), R118, and R151. ATP is bound by residues K202, E324, and 350–353 (GGDT).

The protein belongs to the phosphoglycerate kinase family. As to quaternary structure, monomer.

It localises to the cytoplasm. The catalysed reaction is (2R)-3-phosphoglycerate + ATP = (2R)-3-phospho-glyceroyl phosphate + ADP. Its pathway is carbohydrate degradation; glycolysis; pyruvate from D-glyceraldehyde 3-phosphate: step 2/5. The polypeptide is Phosphoglycerate kinase (Acidovorax ebreus (strain TPSY) (Diaphorobacter sp. (strain TPSY))).